The primary structure comprises 406 residues: Pyruvate dehydrogenase E1 component subunit beta-3, chloroplastic (406 aa).

The N-terminal 70 residues, 1–70 (MSAILQGAGA…PLIPNAVTTK (70 aa)), are a transit peptide targeting the chloroplast. Glutamate 142 is a thiamine diphosphate binding site. Residues valine 195, alanine 243, isoleucine 244, and asparagine 248 each contribute to the K(+) site.

In terms of assembly, tetramer of 2 alpha and 2 beta subunits. The cofactor is thiamine diphosphate.

The protein resides in the plastid. Its subcellular location is the chloroplast. The enzyme catalyses N(6)-[(R)-lipoyl]-L-lysyl-[protein] + pyruvate + H(+) = N(6)-[(R)-S(8)-acetyldihydrolipoyl]-L-lysyl-[protein] + CO2. In terms of biological role, the pyruvate dehydrogenase complex catalyzes the overall conversion of pyruvate to acetyl-CoA and CO(2). It contains multiple copies of three enzymatic components: pyruvate dehydrogenase (E1), dihydrolipoamide acetyltransferase (E2) and lipoamide dehydrogenase (E3). In Arabidopsis thaliana (Mouse-ear cress), this protein is Pyruvate dehydrogenase E1 component subunit beta-3, chloroplastic (E1-BETA-2).